The following is a 212-amino-acid chain: Dephospho-CoA kinase (212 aa).

A DPCK domain is found at 4–204; that stretch reads IVALTGGICS…RDYLKAEKTT (201 aa). 12–17 contacts ATP; the sequence is CSGKSV.

Belongs to the CoaE family.

Its subcellular location is the cytoplasm. It catalyses the reaction 3'-dephospho-CoA + ATP = ADP + CoA + H(+). It participates in cofactor biosynthesis; coenzyme A biosynthesis; CoA from (R)-pantothenate: step 5/5. Functionally, catalyzes the phosphorylation of the 3'-hydroxyl group of dephosphocoenzyme A to form coenzyme A. The polypeptide is Dephospho-CoA kinase (Blochmanniella pennsylvanica (strain BPEN)).